The primary structure comprises 208 residues: Uracil phosphoribosyltransferase (208 aa).

Residues Arg78, Arg103, and 130-138 (DPMLATGGS) contribute to the 5-phospho-alpha-D-ribose 1-diphosphate site. Uracil contacts are provided by residues Ile193 and 198–200 (GDA). Asp199 provides a ligand contact to 5-phospho-alpha-D-ribose 1-diphosphate.

Belongs to the UPRTase family. Mg(2+) is required as a cofactor.

It catalyses the reaction UMP + diphosphate = 5-phospho-alpha-D-ribose 1-diphosphate + uracil. It participates in pyrimidine metabolism; UMP biosynthesis via salvage pathway; UMP from uracil: step 1/1. With respect to regulation, allosterically activated by GTP. In terms of biological role, catalyzes the conversion of uracil and 5-phospho-alpha-D-ribose 1-diphosphate (PRPP) to UMP and diphosphate. The polypeptide is Uracil phosphoribosyltransferase (Psychromonas ingrahamii (strain DSM 17664 / CCUG 51855 / 37)).